Consider the following 276-residue polypeptide: Pantothenate synthetase (276 aa).

Met-27–His-34 contributes to the ATP binding site. The active-site Proton donor is the His-34. Gln-58 is a binding site for (R)-pantoate. A beta-alanine-binding site is contributed by Gln-58. Residue Gly-147 to Asp-150 participates in ATP binding. Gln-153 provides a ligand contact to (R)-pantoate. Residues Val-176 and Leu-184–Arg-187 contribute to the ATP site.

The protein belongs to the pantothenate synthetase family. As to quaternary structure, homodimer.

It localises to the cytoplasm. The catalysed reaction is (R)-pantoate + beta-alanine + ATP = (R)-pantothenate + AMP + diphosphate + H(+). It functions in the pathway cofactor biosynthesis; (R)-pantothenate biosynthesis; (R)-pantothenate from (R)-pantoate and beta-alanine: step 1/1. Catalyzes the condensation of pantoate with beta-alanine in an ATP-dependent reaction via a pantoyl-adenylate intermediate. The sequence is that of Pantothenate synthetase from Helicobacter pylori (strain ATCC 700392 / 26695) (Campylobacter pylori).